The primary structure comprises 816 residues: Probable E3 ubiquitin-protein ligase hulA (816 aa).

The C2 domain occupies 1–112 (MGSNLPAQPN…QMGGDEMLTR (112 aa)). Disordered regions lie at residues 134–238 (NLST…WERR) and 253–353 (RTTT…YFVD). 4 stretches are compositionally biased toward polar residues: residues 151-168 (MQPSTSSGLVPQVSASTP), 177-202 (ADPTASNPSLHPQRVPSTTRPSSTIV), 217-226 (SRTNLSSFED), and 253-270 (RTTTWTRPSNNYNEQTSR). A WW 1 domain is found at 229-262 (GRLPAGWERREDNLGRTYYVDHNTRTTTWTRPSN). Residues 279-294 (LERRAHQSRMLPEDRT) are compositionally biased toward basic and acidic residues. Positions 295 to 309 (GASSPNLQENQQQAQ) are enriched in polar residues. Residues 310 to 333 (TPPAGGSASAVSMMATGATTAGTG) are compositionally biased toward low complexity. WW domains are found at residues 333 to 366 (GELPPGWEQRTTPEGRPYFVDHNTRTTTWVDPRR) and 393 to 426 (GPLPSGWEMRLTNTARVYFVDHNTKTTTWDDPRL). The HECT domain maps to 482–816 (SASDLKKRLM…VEETLGFGQE (335 aa)). Catalysis depends on Cys-784, which acts as the Glycyl thioester intermediate.

Belongs to the RSP5/NEDD4 family. In terms of assembly, interacts with creD.

The protein resides in the cytoplasm. It catalyses the reaction S-ubiquitinyl-[E2 ubiquitin-conjugating enzyme]-L-cysteine + [acceptor protein]-L-lysine = [E2 ubiquitin-conjugating enzyme]-L-cysteine + N(6)-ubiquitinyl-[acceptor protein]-L-lysine.. It participates in protein modification; protein ubiquitination. E3 ubiquitin-protein ligase which accepts ubiquitin from an E2 ubiquitin-conjugating enzyme in the form of a thioester and then directly transfers the ubiquitin to targeted substrates. Probably involved in the regulatory network controlling carbon source utilization. This is Probable E3 ubiquitin-protein ligase hulA (hulA) from Aspergillus oryzae (strain ATCC 42149 / RIB 40) (Yellow koji mold).